The primary structure comprises 405 residues: Glucose-1-phosphate adenylyltransferase 1 (405 aa).

Residues tyrosine 96, glycine 161, 176–177, and serine 194 each bind alpha-D-glucose 1-phosphate; that span reads EK.

The protein belongs to the bacterial/plant glucose-1-phosphate adenylyltransferase family. As to quaternary structure, homotetramer.

The catalysed reaction is alpha-D-glucose 1-phosphate + ATP + H(+) = ADP-alpha-D-glucose + diphosphate. Its pathway is glycan biosynthesis; glycogen biosynthesis. In terms of biological role, involved in the biosynthesis of ADP-glucose, a building block required for the elongation reactions to produce glycogen. Catalyzes the reaction between ATP and alpha-D-glucose 1-phosphate (G1P) to produce pyrophosphate and ADP-Glc. The sequence is that of Glucose-1-phosphate adenylyltransferase 1 from Vibrio parahaemolyticus serotype O3:K6 (strain RIMD 2210633).